Here is a 368-residue protein sequence, read N- to C-terminus: MKTSIHRPSQALVDLSAIHFNIEQLKAHLPQDVEKWAVVKANAYGHGAVAVSSYIDDIVDGFCVSNIDEALELREGGLDKKILILGVSAIEVVPLAIQNKITLTVASLEWLDLLEASSLSLQGLVVHLKVDSGMGRIGFRDRQPLQEAINRLQVAGVQVEGIFTHFATADEADASKFEEQLACFKGILAELDALPPIIHASNSATSLWHTDTVMNAVRLGDIIYGLNPSGSVLELPYDIKPALSLVSELVHVKEVEAGADVGYGATYTADEGQFIGTIPLGYADGWTRDMQGFDVLIDGQRCPIVGRISMDQITVRLPEKYPLGTPVVFIGKSGTESISATDVAEKRGTINYEVVCLISDRVPRIYKN.

Lys40 functions as the Proton acceptor; specific for D-alanine in the catalytic mechanism. Position 40 is an N6-(pyridoxal phosphate)lysine (Lys40). Arg136 is a binding site for substrate. Residue Tyr263 is the Proton acceptor; specific for L-alanine of the active site. Met310 is a binding site for substrate.

The protein belongs to the alanine racemase family. It depends on pyridoxal 5'-phosphate as a cofactor.

It catalyses the reaction L-alanine = D-alanine. It functions in the pathway amino-acid biosynthesis; D-alanine biosynthesis; D-alanine from L-alanine: step 1/1. Its function is as follows. Catalyzes the interconversion of L-alanine and D-alanine. May also act on other amino acids. The sequence is that of Alanine racemase (alr) from Streptococcus gordonii (strain Challis / ATCC 35105 / BCRC 15272 / CH1 / DL1 / V288).